Here is a 157-residue protein sequence, read N- to C-terminus: 6,7-dimethyl-8-ribityllumazine synthase (157 aa).

5-amino-6-(D-ribitylamino)uracil is bound by residues Phe22, Ala57–Glu59, and Thr81–Ile83. Gly86–Thr87 lines the (2S)-2-hydroxy-3-oxobutyl phosphate pocket. His89 (proton donor) is an active-site residue. Phe114 is a 5-amino-6-(D-ribitylamino)uracil binding site. (2S)-2-hydroxy-3-oxobutyl phosphate is bound at residue Arg128.

The protein belongs to the DMRL synthase family. In terms of assembly, forms an icosahedral capsid composed of 60 subunits, arranged as a dodecamer of pentamers.

It catalyses the reaction (2S)-2-hydroxy-3-oxobutyl phosphate + 5-amino-6-(D-ribitylamino)uracil = 6,7-dimethyl-8-(1-D-ribityl)lumazine + phosphate + 2 H2O + H(+). It participates in cofactor biosynthesis; riboflavin biosynthesis; riboflavin from 2-hydroxy-3-oxobutyl phosphate and 5-amino-6-(D-ribitylamino)uracil: step 1/2. Catalyzes the formation of 6,7-dimethyl-8-ribityllumazine by condensation of 5-amino-6-(D-ribitylamino)uracil with 3,4-dihydroxy-2-butanone 4-phosphate. This is the penultimate step in the biosynthesis of riboflavin. In Haemophilus influenzae (strain ATCC 51907 / DSM 11121 / KW20 / Rd), this protein is 6,7-dimethyl-8-ribityllumazine synthase.